A 98-amino-acid chain; its full sequence is Small ribosomal subunit protein uS17 (98 aa).

A disordered region spans residues 1-21 (MADQKGPKYTPAAEKPRGRRK). An Isoglutamyl lysine isopeptide (Lys-Gln) (interchain with Q-Cter in protein Pup) cross-link involves residue Lys96.

This sequence belongs to the universal ribosomal protein uS17 family. Part of the 30S ribosomal subunit.

Functionally, one of the primary rRNA binding proteins, it binds specifically to the 5'-end of 16S ribosomal RNA. The polypeptide is Small ribosomal subunit protein uS17 (rpsQ) (Mycolicibacterium smegmatis (strain ATCC 700084 / mc(2)155) (Mycobacterium smegmatis)).